Consider the following 798-residue polypeptide: Acetamidase regulatory protein (798 aa).

Positions Cys20–Cys50 form a DNA-binding region, zn(2)-C6 fungal-type. Disordered stretches follow at residues Val68–Ala96, Ala115–Ala172, and Leu632–Ala714. Low complexity-rich tracts occupy residues Lys82–Pro94 and Thr133–Asn147. Over residues Leu632 to Arg641 the composition is skewed to basic and acidic residues. Residues Ser644 to Gly663 show a composition bias toward polar residues. A compositionally biased stretch (pro residues) spans Pro678–Gln687.

It localises to the nucleus. Positively regulates the expression of 5 genes involved in the catabolism of certain amides (amdS), omega amino acids (gatA and gabA), and lactams (lamA and lamB) in the presence of omega amino acid inducers. The sequence is that of Acetamidase regulatory protein (amdR) from Emericella nidulans (strain FGSC A4 / ATCC 38163 / CBS 112.46 / NRRL 194 / M139) (Aspergillus nidulans).